A 574-amino-acid polypeptide reads, in one-letter code: Tyrosinase (574 aa).

Cu cation is bound by residues His67, His95, His104, His275, His279, and His304. The 2'-(S-cysteinyl)-histidine (Cys-His) cross-link spans 93-95; it reads CTH.

It belongs to the tyrosinase family. The cofactor is Cu(2+).

It carries out the reaction 2 L-dopa + O2 = 2 L-dopaquinone + 2 H2O. It catalyses the reaction L-tyrosine + O2 = L-dopaquinone + H2O. Functionally, this is a copper-containing oxidase that functions in the formation of pigments such as melanins and other polyphenolic compounds. This Podospora anserina (Pleurage anserina) protein is Tyrosinase (TYR).